Reading from the N-terminus, the 67-residue chain is Small ribosomal subunit protein eS31 (67 aa).

Cys-31, Cys-34, Cys-49, and Cys-52 together coordinate Zn(2+). Residues 31-52 (CPKCGAGVFMAEHLNRFACGKC) form a C4-type zinc finger.

Belongs to the eukaryotic ribosomal protein eS31 family. Part of the 30S ribosomal subunit. Requires Zn(2+) as cofactor.

The protein is Small ribosomal subunit protein eS31 of Methanococcus maripaludis (strain C7 / ATCC BAA-1331).